Reading from the N-terminus, the 140-residue chain is Organic hydroperoxide resistance protein-like (140 aa).

Belongs to the OsmC/Ohr family.

This Staphylococcus aureus (strain MRSA252) protein is Organic hydroperoxide resistance protein-like.